Here is a 47-residue protein sequence, read N- to C-terminus: Large ribosomal subunit protein bL34 (47 aa).

The disordered stretch occupies residues 1-28; it reads MAKGKRTFQPNNRRRARVHGFRTRMRTR.

The protein belongs to the bacterial ribosomal protein bL34 family.

In Corynebacterium efficiens (strain DSM 44549 / YS-314 / AJ 12310 / JCM 11189 / NBRC 100395), this protein is Large ribosomal subunit protein bL34.